The chain runs to 99 residues: NADH-quinone oxidoreductase subunit K (99 aa).

Transmembrane regions (helical) follow at residues 3–23 (PMYY…GVLL), 28–48 (IIVF…LVTF), and 62–82 (FFVM…IVAI).

It belongs to the complex I subunit 4L family. As to quaternary structure, NDH-1 is composed of 14 different subunits. Subunits NuoA, H, J, K, L, M, N constitute the membrane sector of the complex.

The protein resides in the cell membrane. The catalysed reaction is a quinone + NADH + 5 H(+)(in) = a quinol + NAD(+) + 4 H(+)(out). Functionally, NDH-1 shuttles electrons from NADH, via FMN and iron-sulfur (Fe-S) centers, to quinones in the respiratory chain. The immediate electron acceptor for the enzyme in this species is believed to be a menaquinone. Couples the redox reaction to proton translocation (for every two electrons transferred, four hydrogen ions are translocated across the cytoplasmic membrane), and thus conserves the redox energy in a proton gradient. The protein is NADH-quinone oxidoreductase subunit K of Acidothermus cellulolyticus (strain ATCC 43068 / DSM 8971 / 11B).